A 572-amino-acid polypeptide reads, in one-letter code: Probable D-xylulose kinase A (572 aa).

His95, Arg166, Asp282, and Asn283 together coordinate substrate. Residues Trp365, 470-471 (GG), and Asn474 contribute to the ATP site.

The protein belongs to the FGGY kinase family.

The protein resides in the cytoplasm. The enzyme catalyses D-xylulose + ATP = D-xylulose 5-phosphate + ADP + H(+). Functionally, highly specific D-xylulose kinase which participates in the catabolism of xylose. Xylose is a major component of hemicelluloses such as xylan. Most fungi utilize D-xylose via three enzymatic reactions, xylose reductase (XR), xylitol dehydrogenase (XDH), and xylulokinase, to form xylulose 5-phosphate, which enters pentose phosphate pathway. The sequence is that of Probable D-xylulose kinase A (xkiA) from Aspergillus flavus (strain ATCC 200026 / FGSC A1120 / IAM 13836 / NRRL 3357 / JCM 12722 / SRRC 167).